Reading from the N-terminus, the 516-residue chain is GMP synthase [glutamine-hydrolyzing] (516 aa).

The Glutamine amidotransferase type-1 domain maps to 10-201; it reads KIIVLDFGSQ…AFDVCGAVAN (192 aa). Cys87 serves as the catalytic Nucleophile. Residues His175 and Glu177 contribute to the active site. One can recognise a GMPS ATP-PPase domain in the interval 202–391; sequence WTMADFIDMQ…LGIPHDLVWR (190 aa). 229-235 contacts ATP; it reads SGGVDSS.

In terms of assembly, homodimer.

It catalyses the reaction XMP + L-glutamine + ATP + H2O = GMP + L-glutamate + AMP + diphosphate + 2 H(+). Its pathway is purine metabolism; GMP biosynthesis; GMP from XMP (L-Gln route): step 1/1. Catalyzes the synthesis of GMP from XMP. The polypeptide is GMP synthase [glutamine-hydrolyzing] (Lactobacillus acidophilus (strain ATCC 700396 / NCK56 / N2 / NCFM)).